The chain runs to 308 residues: Thymidylate synthase (308 aa).

Residues arginine 26 and 170 to 171 (RR) contribute to the dUMP site. Cysteine 190 functions as the Nucleophile in the catalytic mechanism. DUMP-binding positions include 210-213 (RSCD), asparagine 221, and 251-253 (HVY). Aspartate 213 provides a ligand contact to (6R)-5,10-methylene-5,6,7,8-tetrahydrofolate. (6R)-5,10-methylene-5,6,7,8-tetrahydrofolate is bound at residue alanine 307.

Belongs to the thymidylate synthase family. Bacterial-type ThyA subfamily. As to quaternary structure, homodimer.

Its subcellular location is the cytoplasm. It carries out the reaction dUMP + (6R)-5,10-methylene-5,6,7,8-tetrahydrofolate = 7,8-dihydrofolate + dTMP. The protein operates within pyrimidine metabolism; dTTP biosynthesis. Its function is as follows. Catalyzes the reductive methylation of 2'-deoxyuridine-5'-monophosphate (dUMP) to 2'-deoxythymidine-5'-monophosphate (dTMP) while utilizing 5,10-methylenetetrahydrofolate (mTHF) as the methyl donor and reductant in the reaction, yielding dihydrofolate (DHF) as a by-product. This enzymatic reaction provides an intracellular de novo source of dTMP, an essential precursor for DNA biosynthesis. The sequence is that of Thymidylate synthase from Rhizorhabdus wittichii (strain DSM 6014 / CCUG 31198 / JCM 15750 / NBRC 105917 / EY 4224 / RW1) (Sphingomonas wittichii).